A 1043-amino-acid polypeptide reads, in one-letter code: Unconventional myosin-Ia (1043 aa).

One can recognise a Myosin motor domain in the interval 8–694 (VGVEDLILLE…TLFYLEEQRR (687 aa)). 101-108 (GESGAGKT) lines the ATP pocket. An actin-binding region spans residues 571–593 (VAVLMKNLYSKNPNYIRCIKPND). IQ domains follow at residues 697–719 (LQQL…HYQQ), 720–742 (MRKS…HYGK), and 743–772 (IRSS…SGAA). The TH1 domain maps to 858 to 1042 (KASYPQSVPI…KGSNAMEVTV (185 aa)).

Belongs to the TRAFAC class myosin-kinesin ATPase superfamily. Myosin family. Phosphorylated by ALPK1.

Involved in directing the movement of organelles along actin filaments. The polypeptide is Unconventional myosin-Ia (Myo1a) (Mus musculus (Mouse)).